The sequence spans 375 residues: Ubl carboxyl-terminal hydrolase 18 (375 aa).

Positions 18 to 45 (ESPQSPADLEEKKEEDSNMKREQPRERP) are disordered. Positions 26–45 (LEEKKEEDSNMKREQPRERP) are enriched in basic and acidic residues. Residues 55–373 (VGLHNIGQTC…TAYLLVYMKM (319 aa)) enclose the USP domain. Cys64 acts as the Nucleophile in catalysis. His321 functions as the Proton acceptor in the catalytic mechanism.

This sequence belongs to the peptidase C19 family. Interacts with STAT2; the interaction is direct. Interacts with IFNAR2; indirectly via STAT2, it negatively regulates the assembly of the ternary interferon-IFNAR1-IFNAR2 complex and inhibits type I interferon signaling. Interacts with STING1. Interacts with USP20.

The enzyme catalyses Thiol-dependent hydrolysis of ester, thioester, amide, peptide and isopeptide bonds formed by the C-terminal Gly of ubiquitin (a 76-residue protein attached to proteins as an intracellular targeting signal).. Functionally, interferon-induced ISG15-specific protease that plays a crucial role for maintaining a proper balance of ISG15-conjugated proteins in cells. Regulates protein ISGylation by efficiently cleaving ISG15 conjugates linked via isopeptide bonds. Regulates T-cell activation and T-helper 17 (Th17) cell differentiation by deubiquitinating TAK1, likely to keep TAK1-TAB complexes in steady conditions. In turn, restricts activation of NF-kappa-B, NFAT, and JNK as well as expression of IL2 in T-cells after TCR activation. Acts as a molecular adapter with USP20 to promote innate antiviral response through deubiquitinating STING1. Involved also in the negative regulation of the inflammatory response triggered by type I interferon. Upon recruitment by STAT2 to the type I interferon receptor subunit IFNAR2 interferes with the assembly of the ternary interferon-IFNAR1-IFNAR2 complex and acts as a negative regulator of the type I interferon signaling pathway. This Pongo abelii (Sumatran orangutan) protein is Ubl carboxyl-terminal hydrolase 18 (USP18).